A 356-amino-acid chain; its full sequence is D-alanine--D-alanine ligase (356 aa).

In terms of domain architecture, ATP-grasp spans 134 to 339 (KQLFATRGLP…YSELITDLIN (206 aa)). 167–222 (EGKLTYPVFVKPANLGSSVGISKCTDSETLIHGIEEALQFDRKLVIEQGVNAREVE) serves as a coordination point for ATP. Mg(2+) is bound by residues D293, E306, and N308.

Belongs to the D-alanine--D-alanine ligase family. It depends on Mg(2+) as a cofactor. Mn(2+) serves as cofactor.

It is found in the cytoplasm. The catalysed reaction is 2 D-alanine + ATP = D-alanyl-D-alanine + ADP + phosphate + H(+). It functions in the pathway cell wall biogenesis; peptidoglycan biosynthesis. Functionally, cell wall formation. This is D-alanine--D-alanine ligase from Macrococcus caseolyticus (strain JCSC5402) (Macrococcoides caseolyticum).